Here is a 58-residue protein sequence, read N- to C-terminus: Small ribosomal subunit protein bS21 (58 aa).

The disordered stretch occupies residues 36–58 (RHHETPVEKYKRKLQQRRRSRRR). The span at 45-58 (YKRKLQQRRRSRRR) shows a compositional bias: basic residues.

The protein belongs to the bacterial ribosomal protein bS21 family.

The polypeptide is Small ribosomal subunit protein bS21 (Prochlorococcus marinus (strain NATL1A)).